The primary structure comprises 270 residues: Putative phosphoenolpyruvate synthase regulatory protein (270 aa).

Residue G150–T157 coordinates ADP.

It belongs to the pyruvate, phosphate/water dikinase regulatory protein family. PSRP subfamily.

The enzyme catalyses [pyruvate, water dikinase] + ADP = [pyruvate, water dikinase]-phosphate + AMP + H(+). The catalysed reaction is [pyruvate, water dikinase]-phosphate + phosphate + H(+) = [pyruvate, water dikinase] + diphosphate. In terms of biological role, bifunctional serine/threonine kinase and phosphorylase involved in the regulation of the phosphoenolpyruvate synthase (PEPS) by catalyzing its phosphorylation/dephosphorylation. The polypeptide is Putative phosphoenolpyruvate synthase regulatory protein (Shewanella denitrificans (strain OS217 / ATCC BAA-1090 / DSM 15013)).